A 132-amino-acid polypeptide reads, in one-letter code: Intraflagellar transport protein 20 homolog B (132 aa).

Positions 87-112 (EAQQQQLYALIAEKKMQLERYRIEYD) form a coiled coil.

It localises to the golgi apparatus. Its subcellular location is the cis-Golgi network. The protein resides in the cytoplasm. The protein localises to the cytoskeleton. It is found in the microtubule organizing center. It localises to the centrosome. Its subcellular location is the centriole. The protein resides in the cell projection. The protein localises to the cilium. In terms of biological role, involved in ciliary process assembly. May play a role in the trafficking of ciliary membrane proteins from the Golgi complex to the cilium. Regulates the platelet-derived growth factor receptor-alpha (PDGFRA) signaling pathway. Plays an important role in spermatogenesis, particularly spermiogenesis, when germ cells form flagella. The polypeptide is Intraflagellar transport protein 20 homolog B (ift20-b) (Xenopus laevis (African clawed frog)).